Consider the following 1071-residue polypeptide: ATP-dependent helicase/deoxyribonuclease subunit B (1071 aa).

This sequence belongs to the helicase family. AddB/RexB type 2 subfamily. Heterodimer of AddA and RexB. It depends on Mg(2+) as a cofactor.

The heterodimer acts as both an ATP-dependent DNA helicase and an ATP-dependent, dual-direction single-stranded exonuclease. Recognizes the chi site generating a DNA molecule suitable for the initiation of homologous recombination. This subunit has 5' -&gt; 3' nuclease activity but not helicase activity. This is ATP-dependent helicase/deoxyribonuclease subunit B from Streptococcus pyogenes serotype M49 (strain NZ131).